The chain runs to 406 residues: Purine nucleoside permease (406 aa).

The N-terminal stretch at 1–22 (MKLSTLFTLATTISTLTTFTIA) is a signal peptide.

It belongs to the NUP family.

Mammalian nucleoside transport inhibitors dipyridamole and NBMPR inhibit adenosine transport by NUP. Functionally, nucleoside permease that transports adenosine and guanosine. Does not show any transport activities towards cytidine, adenine, guanine, uridine, and uracil. The protein is Purine nucleoside permease of Candida albicans (Yeast).